Consider the following 333-residue polypeptide: Ketoreductase sphI (333 aa).

Residue tyrosine 167 coordinates NADP(+).

The protein belongs to the NAD(P)-dependent epimerase/dehydratase family. Dihydroflavonol-4-reductase subfamily.

In terms of biological role, ketoreductase; part of the gene cluster that mediates the biosynthesis of sphingofungins, bioactive molecules acting as sphingolipid inhibitors via inhibiting serine palmitoyl transferase (SPT). Does not seem to be involved in any biosynthetic process leading to the production of sphingofungins, but might be connected to a regulation or resistance mechanism. The chain is Ketoreductase sphI from Aspergillus fumigatus (strain CBS 144.89 / FGSC A1163 / CEA10) (Neosartorya fumigata).